A 287-amino-acid polypeptide reads, in one-letter code: Bifunctional protein FolD (287 aa).

NADP(+)-binding positions include N165–S167, S190, and I233.

Belongs to the tetrahydrofolate dehydrogenase/cyclohydrolase family. As to quaternary structure, homodimer.

The enzyme catalyses (6R)-5,10-methylene-5,6,7,8-tetrahydrofolate + NADP(+) = (6R)-5,10-methenyltetrahydrofolate + NADPH. It carries out the reaction (6R)-5,10-methenyltetrahydrofolate + H2O = (6R)-10-formyltetrahydrofolate + H(+). It participates in one-carbon metabolism; tetrahydrofolate interconversion. In terms of biological role, catalyzes the oxidation of 5,10-methylenetetrahydrofolate to 5,10-methenyltetrahydrofolate and then the hydrolysis of 5,10-methenyltetrahydrofolate to 10-formyltetrahydrofolate. The protein is Bifunctional protein FolD of Nitrosopumilus maritimus (strain SCM1).